The chain runs to 519 residues: 3-octaprenyl-4-hydroxybenzoate carboxy-lyase (519 aa).

Asn-177 lines the Mn(2+) pocket. Prenylated FMN contacts are provided by residues 180-182 (IYR), 194-196 (RWL), and 199-200 (RG). Glu-243 serves as a coordination point for Mn(2+). Residue Asp-318 is the Proton donor of the active site.

This sequence belongs to the UbiD family. In terms of assembly, homohexamer. The cofactor is prenylated FMN. Mn(2+) serves as cofactor.

The protein resides in the cell membrane. It catalyses the reaction a 4-hydroxy-3-(all-trans-polyprenyl)benzoate + H(+) = a 2-(all-trans-polyprenyl)phenol + CO2. It functions in the pathway cofactor biosynthesis; ubiquinone biosynthesis. In terms of biological role, catalyzes the decarboxylation of 3-octaprenyl-4-hydroxy benzoate to 2-octaprenylphenol, an intermediate step in ubiquinone biosynthesis. The chain is 3-octaprenyl-4-hydroxybenzoate carboxy-lyase from Burkholderia mallei (strain ATCC 23344).